A 232-amino-acid polypeptide reads, in one-letter code: Protein G1-like3 (232 aa).

2 disordered regions span residues 20–77 and 189–232; these read AGLL…YEAQ and ARAR…GAAC. Gly residues predominate over residues 38 to 53; sequence AGGGGGGGGDGAGGSS. The ALOG domain maps to 73–200; sequence RYEAQKRRDW…ARGVSYEKKK (128 aa). Positions 198-202 match the Nuclear localization signal motif; that stretch reads KKKRK. Residues 216 to 232 are compositionally biased toward pro residues; that stretch reads PHPPPPPPPPPSAGAAC.

It belongs to the plant homeotic and developmental regulators ALOG protein family.

It is found in the nucleus. Functionally, probable transcription regulator that acts as a developmental regulator by promoting cell growth in response to light. The polypeptide is Protein G1-like3 (Oryza sativa subsp. indica (Rice)).